We begin with the raw amino-acid sequence, 217 residues long: Carboxylesterase Culp1 (217 aa).

The signal sequence occupies residues 1 to 32; it reads MTPRSLVRIVGVVVATTLALVSAPAGGRAAHA. Cysteines 35 and 107 form a disulfide. S118 (nucleophile) is an active-site residue. The cysteines at positions 177 and 184 are disulfide-linked. The active site involves D181. Catalysis depends on H193, which acts as the Proton donor/acceptor.

This sequence belongs to the cutinase family.

The protein resides in the secreted. It carries out the reaction a fatty acid ester + H2O = an aliphatic alcohol + a fatty acid + H(+). In terms of biological role, shows esterase activity, with a preference for short- and medium-chain fatty acids. The sequence is that of Carboxylesterase Culp1 from Mycobacterium bovis (strain ATCC BAA-935 / AF2122/97).